Consider the following 213-residue polypeptide: MFRPYSLEEGTFLVRLARAVVEKYLTTGRIEVPESVFPKLLSDNYGVFTTIESIHGDKYELRGCIGYPEGYRNTLYATVFSAIGACCQDPRFPALRREELASVIFEVSILSPLNLLEVDPRKYPEIIEVGRHGLVVKRGPYSGLLLPQVPVEECWSPEEFLMHTCIKAWLPGDCWLDKKTKLYIYEAQIFREKSPGGEVYERDLVSEFARCQR.

The AMMECR1 domain occupies 8–201 (EEGTFLVRLA…EKSPGGEVYE (194 aa)).

The polypeptide is Protein PAE0745 (Pyrobaculum aerophilum (strain ATCC 51768 / DSM 7523 / JCM 9630 / CIP 104966 / NBRC 100827 / IM2)).